Here is a 198-residue protein sequence, read N- to C-terminus: Endonuclease V (198 aa).

D38 and D101 together coordinate Mg(2+).

The protein belongs to the endonuclease V family. Mg(2+) is required as a cofactor.

The protein resides in the cytoplasm. It carries out the reaction Endonucleolytic cleavage at apurinic or apyrimidinic sites to products with a 5'-phosphate.. In terms of biological role, DNA repair enzyme involved in the repair of deaminated bases. Selectively cleaves double-stranded DNA at the second phosphodiester bond 3' to a deoxyinosine leaving behind the intact lesion on the nicked DNA. The protein is Endonuclease V of Saccharolobus islandicus (strain Y.N.15.51 / Yellowstone #2) (Sulfolobus islandicus).